A 178-amino-acid chain; its full sequence is Translation initiation factor IF-3 (178 aa).

The protein belongs to the IF-3 family. As to quaternary structure, monomer.

Its subcellular location is the cytoplasm. Its function is as follows. IF-3 binds to the 30S ribosomal subunit and shifts the equilibrium between 70S ribosomes and their 50S and 30S subunits in favor of the free subunits, thus enhancing the availability of 30S subunits on which protein synthesis initiation begins. In Nautilia profundicola (strain ATCC BAA-1463 / DSM 18972 / AmH), this protein is Translation initiation factor IF-3.